The sequence spans 378 residues: Chaperone protein DnaJ (378 aa).

The J domain occupies 5–70 (DYYEVLSVGR…DKKAAYDQFG (66 aa)). The segment at 133 to 211 (GLTKELRIPT…CHGEGRVEKS (79 aa)) adopts a CR-type zinc-finger fold. Residues Cys146, Cys149, Cys163, Cys166, Cys185, Cys188, Cys199, and Cys202 each coordinate Zn(2+). 4 CXXCXGXG motif repeats span residues 146-153 (CDTCDGSG), 163-170 (CGTCHGQG), 185-192 (CPTCHGRG), and 199-206 (CNSCHGEG).

It belongs to the DnaJ family. In terms of assembly, homodimer. Zn(2+) serves as cofactor.

The protein resides in the cytoplasm. Its function is as follows. Participates actively in the response to hyperosmotic and heat shock by preventing the aggregation of stress-denatured proteins and by disaggregating proteins, also in an autonomous, DnaK-independent fashion. Unfolded proteins bind initially to DnaJ; upon interaction with the DnaJ-bound protein, DnaK hydrolyzes its bound ATP, resulting in the formation of a stable complex. GrpE releases ADP from DnaK; ATP binding to DnaK triggers the release of the substrate protein, thus completing the reaction cycle. Several rounds of ATP-dependent interactions between DnaJ, DnaK and GrpE are required for fully efficient folding. Also involved, together with DnaK and GrpE, in the DNA replication of plasmids through activation of initiation proteins. The protein is Chaperone protein DnaJ of Shewanella woodyi (strain ATCC 51908 / MS32).